A 212-amino-acid polypeptide reads, in one-letter code: Large ribosomal subunit protein uL1 (212 aa).

This sequence belongs to the universal ribosomal protein uL1 family. Part of the 50S ribosomal subunit.

In terms of biological role, binds directly to 23S rRNA. Probably involved in E site tRNA release. Functionally, protein L1 is also a translational repressor protein, it controls the translation of its operon by binding to its mRNA. The protein is Large ribosomal subunit protein uL1 of Methanosphaera stadtmanae (strain ATCC 43021 / DSM 3091 / JCM 11832 / MCB-3).